The following is a 372-amino-acid chain: tRNA pseudouridine synthase D (372 aa).

Catalysis depends on Asp-85, which acts as the Nucleophile. Residues 160 to 330 enclose the TRUD domain; sequence GFTNYFGYQR…MQGSRRFMWG (171 aa).

Belongs to the pseudouridine synthase TruD family.

The enzyme catalyses uridine(13) in tRNA = pseudouridine(13) in tRNA. Its function is as follows. Responsible for synthesis of pseudouridine from uracil-13 in transfer RNAs. This chain is tRNA pseudouridine synthase D, found in Campylobacter jejuni subsp. jejuni serotype O:23/36 (strain 81-176).